Reading from the N-terminus, the 351-residue chain is Cytochrome c biogenesis protein CcsA (351 aa).

Transmembrane regions (helical) follow at residues 17 to 37 (VLFL…LPAI), 38 to 58 (NALG…LLGA), 68 to 88 (LSNL…VHLI), 97 to 117 (LVGV…TLTL), 143 to 163 (MMLS…FLVI), 259 to 279 (IIGL…VWAN), 286 to 306 (WSWD…AAYL), and 320 to 340 (AILA…VNLL).

It belongs to the CcmF/CycK/Ccl1/NrfE/CcsA family. May interact with ccs1.

It is found in the cellular thylakoid membrane. Required during biogenesis of c-type cytochromes (cytochrome c6 and cytochrome f) at the step of heme attachment. The chain is Cytochrome c biogenesis protein CcsA from Trichormus variabilis (strain ATCC 29413 / PCC 7937) (Anabaena variabilis).